Here is a 266-residue protein sequence, read N- to C-terminus: 3-methyl-2-oxobutanoate hydroxymethyltransferase (266 aa).

Mg(2+) contacts are provided by D46 and D85. Residues 46–47 (DS), D85, and K115 contribute to the 3-methyl-2-oxobutanoate site. Mg(2+) is bound at residue E117. Catalysis depends on E183, which acts as the Proton acceptor.

This sequence belongs to the PanB family. Homodecamer; pentamer of dimers. Mg(2+) serves as cofactor.

The protein resides in the cytoplasm. It carries out the reaction 3-methyl-2-oxobutanoate + (6R)-5,10-methylene-5,6,7,8-tetrahydrofolate + H2O = 2-dehydropantoate + (6S)-5,6,7,8-tetrahydrofolate. The protein operates within cofactor biosynthesis; (R)-pantothenate biosynthesis; (R)-pantoate from 3-methyl-2-oxobutanoate: step 1/2. Catalyzes the reversible reaction in which hydroxymethyl group from 5,10-methylenetetrahydrofolate is transferred onto alpha-ketoisovalerate to form ketopantoate. The chain is 3-methyl-2-oxobutanoate hydroxymethyltransferase from Trichlorobacter lovleyi (strain ATCC BAA-1151 / DSM 17278 / SZ) (Geobacter lovleyi).